The following is a 236-amino-acid chain: Small ribosomal subunit protein uS3 (236 aa).

In terms of domain architecture, KH type-2 spans 39-107 (VREFLKKSLS…PAQISITEIK (69 aa)).

The protein belongs to the universal ribosomal protein uS3 family. Part of the 30S ribosomal subunit. Forms a tight complex with proteins S10 and S14.

In terms of biological role, binds the lower part of the 30S subunit head. Binds mRNA in the 70S ribosome, positioning it for translation. This is Small ribosomal subunit protein uS3 from Wigglesworthia glossinidia brevipalpis.